The sequence spans 161 residues: Lipoprotein signal peptidase (161 aa).

The next 3 membrane-spanning stretches (helical) occupy residues 9-29, 63-83, and 88-108; these read ISLLMTIIVLVFDQVSKWLIT, KMLFFYIITIIILIVLVIFYI, and FNLFMQVAISLLFAGALGNFI. Residues Asp118 and Asp136 contribute to the active site. A helical membrane pass occupies residues 131 to 151; the sequence is IFNIADSSLTIGVIFVIIALI.

This sequence belongs to the peptidase A8 family.

The protein localises to the cell membrane. It carries out the reaction Release of signal peptides from bacterial membrane prolipoproteins. Hydrolyzes -Xaa-Yaa-Zaa-|-(S,diacylglyceryl)Cys-, in which Xaa is hydrophobic (preferably Leu), and Yaa (Ala or Ser) and Zaa (Gly or Ala) have small, neutral side chains.. It participates in protein modification; lipoprotein biosynthesis (signal peptide cleavage). This protein specifically catalyzes the removal of signal peptides from prolipoproteins. The polypeptide is Lipoprotein signal peptidase (Staphylococcus epidermidis (strain ATCC 12228 / FDA PCI 1200)).